The primary structure comprises 234 residues: ATP-dependent dethiobiotin synthetase BioD (234 aa).

Residue Asp12–Ile17 coordinates ATP. Residue Thr16 coordinates Mg(2+). Residue Lys37 is part of the active site. Substrate is bound at residue Thr41. Residues Asp54 and Glu115–Gly118 each bind ATP. Mg(2+)-binding residues include Asp54 and Glu115.

The protein belongs to the dethiobiotin synthetase family. As to quaternary structure, homodimer. It depends on Mg(2+) as a cofactor.

The protein localises to the cytoplasm. It carries out the reaction (7R,8S)-7,8-diammoniononanoate + CO2 + ATP = (4R,5S)-dethiobiotin + ADP + phosphate + 3 H(+). It functions in the pathway cofactor biosynthesis; biotin biosynthesis; biotin from 7,8-diaminononanoate: step 1/2. In terms of biological role, catalyzes a mechanistically unusual reaction, the ATP-dependent insertion of CO2 between the N7 and N8 nitrogen atoms of 7,8-diaminopelargonic acid (DAPA, also called 7,8-diammoniononanoate) to form a ureido ring. The sequence is that of ATP-dependent dethiobiotin synthetase BioD from Lysinibacillus sphaericus (strain C3-41).